The following is a 663-amino-acid chain: UvrABC system protein B (663 aa).

Residues 1–10 (MIDKRDDKPF) are compositionally biased toward basic and acidic residues. The disordered stretch occupies residues 1 to 23 (MIDKRDDKPFKLKSKYKPSGDQP). The Helicase ATP-binding domain occupies 31-271 (DNIEGGEKAQ…EQSIAKIQAE (241 aa)). Position 44–51 (44–51 (GATGTGKT)) interacts with ATP. The short motif at 97 to 120 (YYDYYQPEAYVPSSDTYIEKDSSV) is the Beta-hairpin element. Residues 435–601 (QMDDLLGEIN…TIKKDIRGLI (167 aa)) form the Helicase C-terminal domain. Residues 627-662 (KEAINALQKQMQEAAELLDFELAAQMRDLILELKLM) form the UVR domain.

It belongs to the UvrB family. Forms a heterotetramer with UvrA during the search for lesions. Interacts with UvrC in an incision complex.

The protein resides in the cytoplasm. Its function is as follows. The UvrABC repair system catalyzes the recognition and processing of DNA lesions. A damage recognition complex composed of 2 UvrA and 2 UvrB subunits scans DNA for abnormalities. Upon binding of the UvrA(2)B(2) complex to a putative damaged site, the DNA wraps around one UvrB monomer. DNA wrap is dependent on ATP binding by UvrB and probably causes local melting of the DNA helix, facilitating insertion of UvrB beta-hairpin between the DNA strands. Then UvrB probes one DNA strand for the presence of a lesion. If a lesion is found the UvrA subunits dissociate and the UvrB-DNA preincision complex is formed. This complex is subsequently bound by UvrC and the second UvrB is released. If no lesion is found, the DNA wraps around the other UvrB subunit that will check the other stand for damage. The protein is UvrABC system protein B of Streptococcus pyogenes serotype M2 (strain MGAS10270).